We begin with the raw amino-acid sequence, 300 residues long: UDP-N-acetylenolpyruvoylglucosamine reductase (300 aa).

The FAD-binding PCMH-type domain maps to 30-194 (KVGGAADFFV…VGATFRLDPA (165 aa)). Arg-174 is a catalytic residue. Ser-223 (proton donor) is an active-site residue. Glu-293 is an active-site residue.

Belongs to the MurB family. The cofactor is FAD.

It is found in the cytoplasm. It carries out the reaction UDP-N-acetyl-alpha-D-muramate + NADP(+) = UDP-N-acetyl-3-O-(1-carboxyvinyl)-alpha-D-glucosamine + NADPH + H(+). Its pathway is cell wall biogenesis; peptidoglycan biosynthesis. Functionally, cell wall formation. This is UDP-N-acetylenolpyruvoylglucosamine reductase from Geobacter metallireducens (strain ATCC 53774 / DSM 7210 / GS-15).